Reading from the N-terminus, the 393-residue chain is NAD(P)H-quinone oxidoreductase subunit H, chloroplastic (393 aa).

Belongs to the complex I 49 kDa subunit family. In terms of assembly, NDH is composed of at least 16 different subunits, 5 of which are encoded in the nucleus.

The protein localises to the plastid. The protein resides in the chloroplast thylakoid membrane. It catalyses the reaction a plastoquinone + NADH + (n+1) H(+)(in) = a plastoquinol + NAD(+) + n H(+)(out). It carries out the reaction a plastoquinone + NADPH + (n+1) H(+)(in) = a plastoquinol + NADP(+) + n H(+)(out). Functionally, NDH shuttles electrons from NAD(P)H:plastoquinone, via FMN and iron-sulfur (Fe-S) centers, to quinones in the photosynthetic chain and possibly in a chloroplast respiratory chain. The immediate electron acceptor for the enzyme in this species is believed to be plastoquinone. Couples the redox reaction to proton translocation, and thus conserves the redox energy in a proton gradient. The chain is NAD(P)H-quinone oxidoreductase subunit H, chloroplastic from Ranunculus macranthus (Large buttercup).